A 475-amino-acid chain; its full sequence is MEDALLGAMTGPEDELGAELFGSERAFADGLALSPAGGAADRDELPVLADAYLGATEPGEPLLRALSPPPGAEVPAALLGDFPGLPELRSSDDAAPPPAYSVHVLSSLLPGARGPALLPLSAGVRVIPVEIKEAGGGVPGSSPEDAAFQAPLAQESCCKFSSSQEAEEASGCPRKKDSSPMVICQLKGGAQMLCIDNCGARELKALHLLPQYDDQSSFPQSELPKPMTTLVGRLLPVPAKLNLITQVDNGALPSAVNGAAFPSGPALQGPPKIALAGYCDCFSSGDFCNSCSCNNLRHELERFKAIKACLDRNPEAFQPKMGKGRLGAAKLRHSKGCNCKRSGCLKNYCECYEAKITCSSICKCIACKNYEESPERKMLMSTPHYMEPGDFESSHHLSPAKFSGPPRLRKNRQAFSCISWEVVEATCACLLAQGEEAEQERCSPSLAEQMVLEEFGRCLSQILHIEFKSKGLKIE.

Residues S34 and S67 each carry the phosphoserine modification. A CRC domain is found at 263–372; that stretch reads SGPALQGPPK…KCIACKNYEE (110 aa).

It belongs to the lin-54 family.

The protein resides in the cytoplasm. It is found in the nucleus. Its function is as follows. May have a role in spermatogenesis. The sequence is that of Tesmin from Rattus norvegicus (Rat).